The primary structure comprises 355 residues: NADH-quinone oxidoreductase subunit H (355 aa).

8 helical membrane-spanning segments follow: residues 25–45 (IVRI…LILW), 91–111 (WLYL…WAVI), 126–146 (LLYA…AGWA), 170–190 (MGFA…SEIV), 205–225 (FLSW…VSGI), 253–273 (MAFA…SALA), 290–310 (FIPG…VFIW), and 330–350 (VFLP…MSPL).

It belongs to the complex I subunit 1 family. In terms of assembly, NDH-1 is composed of 14 different subunits. Subunits NuoA, H, J, K, L, M, N constitute the membrane sector of the complex.

It localises to the cell inner membrane. The catalysed reaction is a quinone + NADH + 5 H(+)(in) = a quinol + NAD(+) + 4 H(+)(out). In terms of biological role, NDH-1 shuttles electrons from NADH, via FMN and iron-sulfur (Fe-S) centers, to quinones in the respiratory chain. The immediate electron acceptor for the enzyme in this species is believed to be ubiquinone. Couples the redox reaction to proton translocation (for every two electrons transferred, four hydrogen ions are translocated across the cytoplasmic membrane), and thus conserves the redox energy in a proton gradient. This subunit may bind ubiquinone. In Burkholderia ambifaria (strain MC40-6), this protein is NADH-quinone oxidoreductase subunit H.